A 249-amino-acid polypeptide reads, in one-letter code: Expansin-A19 (249 aa).

The signal sequence occupies residues 1–21; the sequence is MGNIFLQLLAVVALCIAPARS. Positions 41-154 constitute an Expansin-like EG45 domain; that stretch reads GGACGYGNLY…QQVKCWRYGG (114 aa). 2 N-linked (GlcNAc...) asparagine glycosylation sites follow: Asn-116 and Asn-216. In terms of domain architecture, Expansin-like CBD spans 164-243; it reads YFELVLVTNM…GWSFGQTFST (80 aa).

This sequence belongs to the expansin family. Expansin A subfamily.

It is found in the secreted. It localises to the cell wall. The protein resides in the membrane. In terms of biological role, may cause loosening and extension of plant cell walls by disrupting non-covalent bonding between cellulose microfibrils and matrix glucans. No enzymatic activity has been found. May be required for rapid internodal elongation in deepwater rice during submergence. In Oryza sativa subsp. japonica (Rice), this protein is Expansin-A19 (EXPA19).